A 98-amino-acid polypeptide reads, in one-letter code: Integration host factor subunit beta (98 aa).

Belongs to the bacterial histone-like protein family. Heterodimer of an alpha and a beta chain.

This protein is one of the two subunits of integration host factor, a specific DNA-binding protein that functions in genetic recombination as well as in transcriptional and translational control. This is Integration host factor subunit beta from Marinobacter nauticus (strain ATCC 700491 / DSM 11845 / VT8) (Marinobacter aquaeolei).